Here is a 377-residue protein sequence, read N- to C-terminus: Probable multidrug ABC transporter permease YbhS (377 aa).

At 1–28 (MSNPILSWRRVRALCVKETRQIVRDPSS) the chain is on the cytoplasmic side. A helical transmembrane segment spans residues 29–49 (WLIAVVIPLLLLFIFGYGINL). The Periplasmic portion of the chain corresponds to 50 to 181 (DSSKLRVGIL…WFNPAAISQH (132 aa)). The region spanning 145–375 (IWQIWQMQRA…GLTWLKTKRR (231 aa)) is the ABC transmembrane type-2 domain. A helical membrane pass occupies residues 182–202 (FIIPGAVTIIMTVIGAILTSL). The Cytoplasmic segment spans residues 203-234 (VVAREWERGTMEALLSTEITRTELLLCKLIPY). The chain crosses the membrane as a helical span at residues 235–255 (YFLGMLAMLLCMLVSVFILGV). At 256–261 (PYRGSL) the chain is on the periplasmic side. Residues 262–282 (LILFFISSLFLLSTLGMGLLI) form a helical membrane-spanning segment. Topologically, residues 283 to 291 (STITRNQFN) are cytoplasmic. Residues 292 to 312 (AAQVALNAAFLPSIMLSGFIF) form a helical membrane-spanning segment. At 313 to 345 (QIDSMPAVIRAVTYIIPARYFVSTLQSLFLAGN) the chain is on the periplasmic side. The helical transmembrane segment at 346–366 (IPVVLVVNVLFLIASAVMFIG) threads the bilayer. Over 367-377 (LTWLKTKRRLD) the chain is Cytoplasmic.

The protein belongs to the ABC-2 integral membrane protein family. The complex is probably composed of two ATP-binding proteins (YbhF) and two transmembrane proteins (YbhR and YbhS).

The protein resides in the cell inner membrane. Part of the ABC transporter complex YbhFSR that could be involved in efflux of cefoperazone. Probably involved in the translocation of the substrate across the membrane. The polypeptide is Probable multidrug ABC transporter permease YbhS (ybhS) (Escherichia coli O157:H7).